A 112-amino-acid chain; its full sequence is Nitrogen regulatory protein P-II (112 aa).

O-UMP-tyrosine is present on Y51.

The protein belongs to the P(II) protein family. As to quaternary structure, homotrimer.

P-II indirectly controls the transcription of the glutamine synthetase gene (glnA). P-II prevents NR-II-catalyzed conversion of NR-I to NR-I-phosphate, the transcriptional activator of glnA. When P-II is uridylylated to P-II-UMP, these events are reversed. When the ratio of Gln to 2-ketoglutarate decreases, P-II is uridylylated to P-II-UMP, which causes the deadenylation of glutamine synthetase, so activating the enzyme. This chain is Nitrogen regulatory protein P-II (glnB), found in Rhodobacter capsulatus (Rhodopseudomonas capsulata).